Here is a 416-residue protein sequence, read N- to C-terminus: Counting factor 60 (416 aa).

The signal sequence occupies residues 1–22; the sequence is MIKKSALITLFLVSLILGVSLS. Residues asparagine 110, asparagine 218, asparagine 231, asparagine 318, and asparagine 411 are each glycosylated (N-linked (GlcNAc...) asparagine).

Belongs to the histidine acid phosphatase family. Component of the counting factor (CF) complex, which includes cf60, cf50, cf45-1 and ctnA.

It localises to the secreted. Cell-counting factor that limits the maximum size of the multicellular structure. Does not possess acid phosphatase activity. Cells with decreased levels of this protein form large groups while cells overexpressing this protein form small groups. The protein is Counting factor 60 (cf60) of Dictyostelium discoideum (Social amoeba).